Consider the following 448-residue polypeptide: Methionine aminopeptidase 2 (448 aa).

The segment covering 1–17 (MPATAEAADAATQATDA) has biased composition (low complexity). A disordered region spans residues 1-87 (MPATAEAADA…QTEPPSIGLT (87 aa)). Basic and acidic residues predominate over residues 21–34 (KLEENKLPEGQERG). A compositionally biased stretch (acidic residues) spans 35 to 46 (PEEEEDDDDDET). The span at 55–71 (KKKKKKKSGAKKKKSKT) shows a compositional bias: basic residues. Histidine 200 provides a ligand contact to substrate. Residues aspartate 220, aspartate 231, and histidine 300 each coordinate a divalent metal cation. Histidine 308 provides a ligand contact to substrate. The a divalent metal cation site is built by glutamate 334 and glutamate 429.

This sequence belongs to the peptidase M24A family. Methionine aminopeptidase eukaryotic type 2 subfamily. The cofactor is Co(2+). Zn(2+) serves as cofactor. Requires Mn(2+) as cofactor. Fe(2+) is required as a cofactor.

It localises to the cytoplasm. It carries out the reaction Release of N-terminal amino acids, preferentially methionine, from peptides and arylamides.. Functionally, cotranslationally removes the N-terminal methionine from nascent proteins. The N-terminal methionine is often cleaved when the second residue in the primary sequence is small and uncharged (Met-Ala-, Cys, Gly, Pro, Ser, Thr, or Val). This chain is Methionine aminopeptidase 2, found in Malassezia globosa (strain ATCC MYA-4612 / CBS 7966) (Dandruff-associated fungus).